Here is a 271-residue protein sequence, read N- to C-terminus: Formamidopyrimidine-DNA glycosylase (271 aa).

The active-site Schiff-base intermediate with DNA is the Pro2. Glu3 acts as the Proton donor in catalysis. The Proton donor; for beta-elimination activity role is filled by Lys56. Residues His89, Arg107, and Arg151 each coordinate DNA. The FPG-type zinc-finger motif lies at 236–270 (MVYARQGQPCRVCATPIKSLRQGQRSTFYCPHCQK). Arg260 functions as the Proton donor; for delta-elimination activity in the catalytic mechanism.

This sequence belongs to the FPG family. Monomer. Requires Zn(2+) as cofactor.

The catalysed reaction is Hydrolysis of DNA containing ring-opened 7-methylguanine residues, releasing 2,6-diamino-4-hydroxy-5-(N-methyl)formamidopyrimidine.. It catalyses the reaction 2'-deoxyribonucleotide-(2'-deoxyribose 5'-phosphate)-2'-deoxyribonucleotide-DNA = a 3'-end 2'-deoxyribonucleotide-(2,3-dehydro-2,3-deoxyribose 5'-phosphate)-DNA + a 5'-end 5'-phospho-2'-deoxyribonucleoside-DNA + H(+). Involved in base excision repair of DNA damaged by oxidation or by mutagenic agents. Acts as a DNA glycosylase that recognizes and removes damaged bases. Has a preference for oxidized purines, such as 7,8-dihydro-8-oxoguanine (8-oxoG). Has AP (apurinic/apyrimidinic) lyase activity and introduces nicks in the DNA strand. Cleaves the DNA backbone by beta-delta elimination to generate a single-strand break at the site of the removed base with both 3'- and 5'-phosphates. The sequence is that of Formamidopyrimidine-DNA glycosylase from Albidiferax ferrireducens (strain ATCC BAA-621 / DSM 15236 / T118) (Rhodoferax ferrireducens).